The primary structure comprises 154 residues: Cyanate hydratase (154 aa).

Residues Arg-100, Glu-103, and Ser-126 contribute to the active site.

This sequence belongs to the cyanase family.

The catalysed reaction is cyanate + hydrogencarbonate + 3 H(+) = NH4(+) + 2 CO2. In terms of biological role, catalyzes the reaction of cyanate with bicarbonate to produce ammonia and carbon dioxide. In Aspergillus terreus (strain NIH 2624 / FGSC A1156), this protein is Cyanate hydratase.